A 429-amino-acid polypeptide reads, in one-letter code: Glutamyl-tRNA reductase (429 aa).

Residues 56–59 (TCNR), Ser-119, 124–126 (EPQ), and Gln-130 contribute to the substrate site. Cys-57 functions as the Nucleophile in the catalytic mechanism. NADP(+) is bound at residue 199–204 (GAGEMI).

This sequence belongs to the glutamyl-tRNA reductase family. Homodimer.

It catalyses the reaction (S)-4-amino-5-oxopentanoate + tRNA(Glu) + NADP(+) = L-glutamyl-tRNA(Glu) + NADPH + H(+). Its pathway is porphyrin-containing compound metabolism; protoporphyrin-IX biosynthesis; 5-aminolevulinate from L-glutamyl-tRNA(Glu): step 1/2. Its function is as follows. Catalyzes the NADPH-dependent reduction of glutamyl-tRNA(Glu) to glutamate 1-semialdehyde (GSA). This is Glutamyl-tRNA reductase from Herminiimonas arsenicoxydans.